Consider the following 265-residue polypeptide: MDPAPTLAAELWRTPYLGGGGGGGGGGRGLEAAASGVTEQSNGSRGGGGGGGAGRRRQREAPALEDDSSRIVSTSGGGGGGQDLTDSEAKRFKASKSSGDNSSLRTEAETDSRNASKSGDQNPPPPEPPKQDYIHVRARRGQATDSHSLAERARREKISERMKILQDLVPGCNKVIGKASVLDEIINYIQALQRQVEFLSMKLEAVNAHVNNGIEAFPPKDFGAQVYNTAPGLTFDPQTPREYAQGSTPSEWLHMQIGGTYERVT.

Residues 1-132 (MDPAPTLAAE…PPPPEPPKQD (132 aa)) form a disordered region. 2 stretches are compositionally biased toward gly residues: residues 17–29 (LGGG…GGRG) and 44–53 (SRGGGGGGGA). A compositionally biased stretch (polar residues) spans 95–105 (SKSSGDNSSLR). The interval 142 to 155 (QATDSHSLAERARR) is basic motif; degenerate. One can recognise a bHLH domain in the interval 142-192 (QATDSHSLAERARREKISERMKILQDLVPGCNKVIGKASVLDEIINYIQAL). Positions 156–192 (EKISERMKILQDLVPGCNKVIGKASVLDEIINYIQAL) are helix-loop-helix motif.

It belongs to the bHLH protein family. Interacts with RSS3.

The protein resides in the nucleus. In terms of biological role, transcription factor that may regulate jasmonate-regulated genes. In Oryza sativa subsp. japonica (Rice), this protein is Transcription factor BHLH089.